The primary structure comprises 272 residues: RELT-like protein 1 (272 aa).

An N-terminal signal peptide occupies residues M1–S23. At S24 to E58 the chain is on the extracellular side. Residues G33–P52 are disordered. The chain crosses the membrane as a helical span at residues Y59 to C79. At H80–E272 the chain is on the cytoplasmic side. Residues T90–N114 adopt a coiled-coil conformation. A phosphoserine mark is found at S110 and S115. 2 disordered regions span residues D146–T171 and E235–E272. Over residues P156 to L166 the composition is skewed to pro residues. Residues E235–S245 are compositionally biased toward basic and acidic residues. A phosphoserine mark is found at S245 and S248.

The protein belongs to the RELT family. As to quaternary structure, interacts with RELT, RELL2, OXSR1 and PLSCR1.

The protein resides in the cell membrane. Its function is as follows. Induces activation of MAPK14/p38 cascade, when overexpressed. Induces apoptosis, when overexpressed. The protein is RELT-like protein 1 (Rell1) of Mus musculus (Mouse).